We begin with the raw amino-acid sequence, 141 residues long: Large ribosomal subunit protein uL16c (141 aa).

This sequence belongs to the universal ribosomal protein uL16 family. As to quaternary structure, part of the 50S ribosomal subunit.

The protein resides in the plastid. The protein localises to the chloroplast. This is Large ribosomal subunit protein uL16c from Zygnema circumcarinatum (Green alga).